A 344-amino-acid polypeptide reads, in one-letter code: GTP 3',8-cyclase (344 aa).

In terms of domain architecture, Radical SAM core spans P19–P244. A GTP-binding site is contributed by R28. The [4Fe-4S] cluster site is built by C35 and C39. S-adenosyl-L-methionine is bound at residue Y41. C42 serves as a coordination point for [4Fe-4S] cluster. GTP is bound at residue R77. G81 contributes to the S-adenosyl-L-methionine binding site. T110 serves as a coordination point for GTP. S134 is a binding site for S-adenosyl-L-methionine. K170 contacts GTP. S-adenosyl-L-methionine is bound at residue M204. The [4Fe-4S] cluster site is built by C268 and C271. Residue R273–R275 coordinates GTP. Position 285 (C285) interacts with [4Fe-4S] cluster.

This sequence belongs to the radical SAM superfamily. MoaA family. In terms of assembly, monomer and homodimer. [4Fe-4S] cluster serves as cofactor.

It catalyses the reaction GTP + AH2 + S-adenosyl-L-methionine = (8S)-3',8-cyclo-7,8-dihydroguanosine 5'-triphosphate + 5'-deoxyadenosine + L-methionine + A + H(+). It functions in the pathway cofactor biosynthesis; molybdopterin biosynthesis. Its function is as follows. Catalyzes the cyclization of GTP to (8S)-3',8-cyclo-7,8-dihydroguanosine 5'-triphosphate. The polypeptide is GTP 3',8-cyclase (Paracoccus denitrificans (strain Pd 1222)).